Consider the following 204-residue polypeptide: Large ribosomal subunit protein uL4 (204 aa).

The interval 44–76 (KRQGTQSAKTRSEVRGGGIKPWRQKGTGRARQG) is disordered.

It belongs to the universal ribosomal protein uL4 family. Part of the 50S ribosomal subunit.

Its function is as follows. One of the primary rRNA binding proteins, this protein initially binds near the 5'-end of the 23S rRNA. It is important during the early stages of 50S assembly. It makes multiple contacts with different domains of the 23S rRNA in the assembled 50S subunit and ribosome. In terms of biological role, forms part of the polypeptide exit tunnel. This chain is Large ribosomal subunit protein uL4, found in Clostridium perfringens (strain ATCC 13124 / DSM 756 / JCM 1290 / NCIMB 6125 / NCTC 8237 / Type A).